Consider the following 1080-residue polypeptide: Origin recognition complex subunit 3 (1080 aa).

3 disordered regions span residues 92-112 (YGIS…DDSS), 566-701 (TIKL…PKRI), and 869-902 (IKNE…ENEQ). Over residues 651–661 (IKSDLECNDND) the composition is skewed to basic and acidic residues. Residues 662–671 (KDNDDNDNDI) show a composition bias toward acidic residues. Composition is skewed to low complexity over residues 672–688 (NENN…NSNN) and 875–896 (QQQQ…QQQQ).

This sequence belongs to the ORC3 family. As to quaternary structure, ORC is composed of six subunits.

Its subcellular location is the nucleus. Component of the origin recognition complex (ORC) that binds origins of replication. DNA-binding is ATP-dependent, however specific DNA sequences that define origins of replication have not been identified so far. ORC is required to assemble the pre-replication complex necessary to initiate DNA replication. The protein is Origin recognition complex subunit 3 (orcC) of Dictyostelium discoideum (Social amoeba).